The chain runs to 131 residues: Profilin-3 (131 aa).

Belongs to the profilin family. In terms of assembly, occurs in many kinds of cells as a complex with monomeric actin in a 1:1 ratio.

It is found in the cytoplasm. It localises to the cytoskeleton. Binds to actin and affects the structure of the cytoskeleton. At high concentrations, profilin prevents the polymerization of actin, whereas it enhances it at low concentrations. By binding to PIP2, it inhibits the formation of IP3 and DG. This is Profilin-3 from Hevea brasiliensis (Para rubber tree).